The primary structure comprises 686 residues: Epsin (686 aa).

The ENTH domain maps to 14–145 (DAVLNTPEIE…QDDQRIKEER (132 aa)). Disordered regions lie at residues 177–417 (YDSD…FNNN) and 463–571 (NSSM…TMRP). Residues 185–211 (NQRDSYGGNQRDSYGGNQRDSYGGNQR) are compositionally biased toward polar residues. Residues 212–225 (ETTRRDSFNGRDEG) are compositionally biased toward basic and acidic residues. The segment covering 237–256 (SYDSDPYSNTRAEYENYSNR) has biased composition (polar residues). 2 stretches are compositionally biased toward low complexity: residues 269-340 (SNNS…SGPS) and 383-417 (NNTN…FNNN). Polar residues predominate over residues 491 to 503 (FDQQSGDFSNKND). A compositionally biased stretch (basic and acidic residues) spans 504-521 (GQQKPKDTNDPWSKKDLF). Low complexity predominate over residues 527-547 (GNQNPNQSPVNNTNNNNNGNT). The span at 558–567 (PITSAGSTIP) shows a compositional bias: polar residues.

Belongs to the epsin family.

It is found in the membrane. Its subcellular location is the clathrin-coated pit. Its function is as follows. Binds to membranes enriched in phosphatidylinositol 4,5-bisphosphate (PtdIns(4,5)P2). The sequence is that of Epsin (epnA) from Dictyostelium discoideum (Social amoeba).